Consider the following 391-residue polypeptide: MTEEFNESMINDIKEGDKVTGEVQQVEDKQVVVHINGGKFNGIIPISQLSTHHIDSPSEVVKEGDEVEAYVTKVEFDEENETGAYILSRRQLETEKSYSYLQEKLDNNEIIEAKVTEVVKGGLVVDVGQRGFVPASLISTDFIEDFSVFDGQTIRIKVEELDPENNRVILSRKAVEQEENDAKKDQLLQSLNEGDVIDGKVARLTQFGAFIDIGGVDGLVHVSELSHEHVQTPEEVVSIGQDVKVKIKSIDRDTERISLSIKDTLPTPFENIKGQFHENDVIEGVVVRLANFGAFVEIAPGVQGLVHISEIAHKHIGTPGEVLEPGQQVNVKILGIDEENERVSLSIKATLPNEDVVESDPSTTKAYLENEEEDNPTIGDMIGDKLKNLKL.

4 consecutive S1 motif domains span residues 16–90, 108–173, 194–262, and 279–348; these read GDKV…LSRR, NEII…LSRK, GDVI…LSIK, and NDVI…LSIK.

The protein belongs to the bacterial ribosomal protein bS1 family.

Its function is as follows. Binds mRNA; thus facilitating recognition of the initiation point. It is needed to translate mRNA with a short Shine-Dalgarno (SD) purine-rich sequence. The polypeptide is Small ribosomal subunit protein bS1 (rpsA) (Staphylococcus aureus (strain MSSA476)).